The primary structure comprises 219 residues: Chloramphenicol acetyltransferase (219 aa).

Residue H190 is the Proton acceptor of the active site.

The protein belongs to the chloramphenicol acetyltransferase family. Homotrimer.

The enzyme catalyses chloramphenicol + acetyl-CoA = chloramphenicol 3-acetate + CoA. Functionally, this enzyme is an effector of chloramphenicol resistance in bacteria. This is Chloramphenicol acetyltransferase (catQ) from Clostridium perfringens.